Reading from the N-terminus, the 394-residue chain is MSVFRFLLFLSLLVGSNAFVKPQYNVTGQIDSALQRFFGITLPSLKIPDLLNPDKKRNPPSVGQLKKTSFPLCNVNLPPIFFTISLFRIKLPNLIPTALPVIKLPTIKIPNILPTLPTIKVPTIKIPDIIPITLPTIKIPEVVPTNLPTVEIPHFIPKTLPTVKIPNIIPTNFPTIETPDIIPKILPTIKIPEIIPLTLPTVKIPDIIPITLPTIKIPEIVPTKLPTVEVPDTIPKTLPTTKIPDIVPITSPTVKIPQIIPTIKIPDIIPKNLSTLGPIKLPTIKLPTLPHILPTKSPKPTPSHKGNMVCDICEKVIGVLTTRLLEIIQKFRVEADKFLTKLCTSLTSNPKTLTVGTMCVMFKGNIMDTIFKGFDGLKKNLEPVSFCKHVPFCK.

An N-terminal signal peptide occupies residues 1–18 (MSVFRFLLFLSLLVGSNA). N-linked (GlcNAc...) asparagine glycans are attached at residues Asn-25 and Asn-272. Positions 306 to 394 (GNMVCDICEK…SFCKHVPFCK (89 aa)) constitute a Saposin B-type domain. Intrachain disulfides connect Cys-310–Cys-393, Cys-313–Cys-387, and Cys-343–Cys-359.

The chain is Saposin-like protein 11 (spp-11) from Caenorhabditis elegans.